Here is a 312-residue protein sequence, read N- to C-terminus: Protein phosphatase PTC7 homolog fig (312 aa).

The PPM-type phosphatase domain occupies 42-306 (IQGSSKDQLA…DDITVILASV (265 aa)). Positions 83, 84, and 228 each coordinate Mn(2+).

This sequence belongs to the PP2C family. Mg(2+) serves as cofactor. Requires Mn(2+) as cofactor.

It carries out the reaction O-phospho-L-seryl-[protein] + H2O = L-seryl-[protein] + phosphate. It catalyses the reaction O-phospho-L-threonyl-[protein] + H2O = L-threonyl-[protein] + phosphate. This is Protein phosphatase PTC7 homolog fig from Drosophila mojavensis (Fruit fly).